The sequence spans 474 residues: tRNA-2-methylthio-N(6)-dimethylallyladenosine synthase (474 aa).

Positions 3-120 (KKLHIKTWGC…LPEMIEQVRR (118 aa)) constitute an MTTase N-terminal domain. The [4Fe-4S] cluster site is built by cysteine 12, cysteine 49, cysteine 83, cysteine 157, cysteine 161, and cysteine 164. Residues 143 to 375 (RAEGPTAFVS…QDRITQQAMR (233 aa)) form the Radical SAM core domain. One can recognise a TRAM domain in the interval 378–441 (RHMMGTVQRI…TNSLRGVFIR (64 aa)).

The protein belongs to the methylthiotransferase family. MiaB subfamily. As to quaternary structure, monomer. It depends on [4Fe-4S] cluster as a cofactor.

The protein localises to the cytoplasm. The enzyme catalyses N(6)-dimethylallyladenosine(37) in tRNA + (sulfur carrier)-SH + AH2 + 2 S-adenosyl-L-methionine = 2-methylsulfanyl-N(6)-dimethylallyladenosine(37) in tRNA + (sulfur carrier)-H + 5'-deoxyadenosine + L-methionine + A + S-adenosyl-L-homocysteine + 2 H(+). Functionally, catalyzes the methylthiolation of N6-(dimethylallyl)adenosine (i(6)A), leading to the formation of 2-methylthio-N6-(dimethylallyl)adenosine (ms(2)i(6)A) at position 37 in tRNAs that read codons beginning with uridine. The protein is tRNA-2-methylthio-N(6)-dimethylallyladenosine synthase of Shewanella baltica (strain OS155 / ATCC BAA-1091).